A 641-amino-acid chain; its full sequence is Threonine--tRNA ligase (641 aa).

Positions 1–61 (MIKINLLNHQ…TQDGDLEILA (61 aa)) constitute a TGS domain. The catalytic stretch occupies residues 240–538 (DHKRLNKKLD…LIEENKGVFP (299 aa)). Zn(2+)-binding residues include cysteine 334, histidine 385, and histidine 515.

It belongs to the class-II aminoacyl-tRNA synthetase family. Homodimer. Requires Zn(2+) as cofactor.

The protein resides in the cytoplasm. It carries out the reaction tRNA(Thr) + L-threonine + ATP = L-threonyl-tRNA(Thr) + AMP + diphosphate + H(+). Its function is as follows. Catalyzes the attachment of threonine to tRNA(Thr) in a two-step reaction: L-threonine is first activated by ATP to form Thr-AMP and then transferred to the acceptor end of tRNA(Thr). Also edits incorrectly charged L-seryl-tRNA(Thr). In Phytoplasma australiense, this protein is Threonine--tRNA ligase.